The primary structure comprises 222 residues: GMP/IMP nucleotidase YrfG (222 aa).

Asp-9 serves as the catalytic Nucleophile. Mg(2+) is bound by residues Asp-9 and Asp-11. Substrate contacts are provided by residues 9–11 (DVD) and Lys-149. Position 174 (Asp-174) interacts with Mg(2+).

It belongs to the HAD-like hydrolase superfamily. It depends on Mg(2+) as a cofactor. Requires Mn(2+) as cofactor. Co(2+) serves as cofactor. Zn(2+) is required as a cofactor.

The catalysed reaction is a ribonucleoside 5'-phosphate + H2O = a ribonucleoside + phosphate. Functionally, catalyzes the dephosphorylation of different purine nucleotides (GMP and IMP). Also hydrolyzes flavin mononucleotide (FMN). This Escherichia coli (strain K12) protein is GMP/IMP nucleotidase YrfG (yrfG).